The following is a 78-amino-acid chain: UPF0349 protein Sca_0544 (78 aa).

It belongs to the UPF0349 family.

The polypeptide is UPF0349 protein Sca_0544 (Staphylococcus carnosus (strain TM300)).